The sequence spans 847 residues: Alpha-glucuronidase A (847 aa).

The N-terminal stretch at 1–22 is a signal peptide; it reads MRSFLLLTALLGVAAVAEDGLA. Residues N48, N78, N227, N315, N349, N457, N472, N534, N583, N689, N738, N739, and N769 are each glycosylated (N-linked (GlcNAc...) asparagine).

It belongs to the glycosyl hydrolase 67 family.

It localises to the secreted. The catalysed reaction is an alpha-D-glucuronoside + H2O = D-glucuronate + an alcohol. Its function is as follows. Alpha-glucuronidase involved in the hydrolysis of xylan, a major structural heterogeneous polysaccharide found in plant biomass representing the second most abundant polysaccharide in the biosphere, after cellulose. Releases 4-O-methylglucuronic acid from xylan. In Emericella nidulans (strain FGSC A4 / ATCC 38163 / CBS 112.46 / NRRL 194 / M139) (Aspergillus nidulans), this protein is Alpha-glucuronidase A (aguA).